A 257-amino-acid polypeptide reads, in one-letter code: Acetylglutamate kinase (257 aa).

Residues 43–44, Arg65, and Asn157 contribute to the substrate site; that span reads GG. Residues 180–185 and 208–210 each bind ATP; these read DVSGIL and IIT.

It belongs to the acetylglutamate kinase family. ArgB subfamily. In terms of assembly, homodimer.

Its subcellular location is the cytoplasm. It catalyses the reaction N-acetyl-L-glutamate + ATP = N-acetyl-L-glutamyl 5-phosphate + ADP. The protein operates within amino-acid biosynthesis; L-arginine biosynthesis; N(2)-acetyl-L-ornithine from L-glutamate: step 2/4. Its function is as follows. Catalyzes the ATP-dependent phosphorylation of N-acetyl-L-glutamate. The chain is Acetylglutamate kinase from Edwardsiella ictaluri (strain 93-146).